Consider the following 194-residue polypeptide: Large ribosomal subunit protein uL5 (194 aa).

Belongs to the universal ribosomal protein uL5 family. As to quaternary structure, part of the 50S ribosomal subunit; part of the 5S rRNA/L5/L18/L25 subcomplex. Contacts the 5S rRNA and the P site tRNA. Forms a bridge to the 30S subunit in the 70S ribosome.

Its function is as follows. This is one of the proteins that bind and probably mediate the attachment of the 5S RNA into the large ribosomal subunit, where it forms part of the central protuberance. In the 70S ribosome it contacts protein S13 of the 30S subunit (bridge B1b), connecting the 2 subunits; this bridge is implicated in subunit movement. Contacts the P site tRNA; the 5S rRNA and some of its associated proteins might help stabilize positioning of ribosome-bound tRNAs. The sequence is that of Large ribosomal subunit protein uL5 from Chlorobium luteolum (strain DSM 273 / BCRC 81028 / 2530) (Pelodictyon luteolum).